Consider the following 155-residue polypeptide: Transcriptional repressor NrdR (155 aa).

Residues 3 to 34 fold into a zinc finger; the sequence is CPFCQHDDTQVLDTRVSEEGDSIRRRRRCTSC. The 91-residue stretch at 49–139 folds into the ATP-cone domain; sequence PVVVKKNGSR…VYKSFEDVAE (91 aa).

The protein belongs to the NrdR family. Zn(2+) serves as cofactor.

Its function is as follows. Negatively regulates transcription of bacterial ribonucleotide reductase nrd genes and operons by binding to NrdR-boxes. This chain is Transcriptional repressor NrdR, found in Janthinobacterium sp. (strain Marseille) (Minibacterium massiliensis).